The chain runs to 420 residues: Phospholipase A1-II 3 (420 aa).

The signal sequence occupies residues 1–21 (MCCFLLVSVLLATTLTDVASA). An N-linked (GlcNAc...) asparagine glycan is attached at Asn-231. Ser-240 functions as the Acyl-ester intermediate in the catalytic mechanism. Ser-240 acts as the Charge relay system in catalysis. A glycan (N-linked (GlcNAc...) asparagine) is linked at Asn-294. Catalysis depends on charge relay system residues Asp-305 and His-343. Residues 367–388 (VVDRDLALVNKEVDALRDEYQV) adopt a coiled-coil conformation. Residue Asn-403 is glycosylated (N-linked (GlcNAc...) asparagine).

It belongs to the AB hydrolase superfamily. Lipase family.

It is found in the secreted. Functionally, acylhydrolase that catalyzes the hydrolysis of phospholipids at the sn-1 position. The chain is Phospholipase A1-II 3 from Oryza sativa subsp. indica (Rice).